We begin with the raw amino-acid sequence, 377 residues long: Gap junction gamma-1 protein (377 aa).

Topologically, residues 1-18 are cytoplasmic; that stretch reads MSWSFLTRLLEEINNHST. A helical membrane pass occupies residues 19 to 39; it reads FVGKIWLTVLIIFRIVLTAVG. Topologically, residues 40-75 are extracellular; that stretch reads GESIYYDEQSKFTCNTHQPGCENVCYDAFAPLSHVR. A helical transmembrane segment spans residues 76-96; sequence FWVFQIILITTPSIMYLGFAM. Over 97–174 the chain is Cytoplasmic; sequence HRIARQPDEQ…RRIKQDGLMK (78 aa). The disordered stretch occupies residues 129 to 163; that stretch reads DYEEAEDNQEEDPMICEEEEPEKDSEKGDKKKHDG. Residues 131 to 151 show a composition bias toward acidic residues; it reads EEAEDNQEEDPMICEEEEPEK. A helical transmembrane segment spans residues 175 to 197; sequence VYVLQLLFRSVFEVGFLMGQYVL. Residues 198-228 are Extracellular-facing; the sequence is YGFEVIPFFVCSRNPCPHTVDCFVSRPTEKT. A helical transmembrane segment spans residues 229–249; it reads IFLLIMYAVSALCLFLNLCEL. At 250–377 the chain is on the cytoplasmic side; that stretch reads FHLGIGGIRD…GVGSREKSGL (128 aa). Disordered stretches follow at residues 266 to 286 and 341 to 377; these read KEIQ…HSVL and AHAS…KSGL. Polar residues predominate over residues 344–362; sequence SRSSSPEANSIAAEQNRLN.

Belongs to the connexin family. Gamma-type subfamily. As to quaternary structure, a connexon is composed of a hexamer of connexins.

It is found in the cell membrane. It localises to the cell junction. The protein localises to the gap junction. Its function is as follows. One gap junction consists of a cluster of closely packed pairs of transmembrane channels, the connexons, through which materials of low MW diffuse from one cell to a neighboring cell. This is Gap junction gamma-1 protein (gjc1) from Xenopus laevis (African clawed frog).